A 494-amino-acid polypeptide reads, in one-letter code: Bifunctional protein HldE (494 aa).

The segment at 1 to 334 (MPTPILDFDA…RKILPHAYLA (334 aa)) is ribokinase. 209-212 (NRKE) contacts ATP. Aspartate 279 is an active-site residue. The cytidylyltransferase stretch occupies residues 362–494 (FTNGCFDILH…LVHRARGGAK (133 aa)).

This sequence in the N-terminal section; belongs to the carbohydrate kinase PfkB family. The protein in the C-terminal section; belongs to the cytidylyltransferase family. In terms of assembly, homodimer.

It carries out the reaction D-glycero-beta-D-manno-heptose 7-phosphate + ATP = D-glycero-beta-D-manno-heptose 1,7-bisphosphate + ADP + H(+). It catalyses the reaction D-glycero-beta-D-manno-heptose 1-phosphate + ATP + H(+) = ADP-D-glycero-beta-D-manno-heptose + diphosphate. It functions in the pathway nucleotide-sugar biosynthesis; ADP-L-glycero-beta-D-manno-heptose biosynthesis; ADP-L-glycero-beta-D-manno-heptose from D-glycero-beta-D-manno-heptose 7-phosphate: step 1/4. Its pathway is nucleotide-sugar biosynthesis; ADP-L-glycero-beta-D-manno-heptose biosynthesis; ADP-L-glycero-beta-D-manno-heptose from D-glycero-beta-D-manno-heptose 7-phosphate: step 3/4. Its function is as follows. Catalyzes the phosphorylation of D-glycero-D-manno-heptose 7-phosphate at the C-1 position to selectively form D-glycero-beta-D-manno-heptose-1,7-bisphosphate. Catalyzes the ADP transfer from ATP to D-glycero-beta-D-manno-heptose 1-phosphate, yielding ADP-D-glycero-beta-D-manno-heptose. The sequence is that of Bifunctional protein HldE from Bradyrhizobium diazoefficiens (strain JCM 10833 / BCRC 13528 / IAM 13628 / NBRC 14792 / USDA 110).